The primary structure comprises 425 residues: Enolase (425 aa).

Q162 is a (2R)-2-phosphoglycerate binding site. E204 functions as the Proton donor in the catalytic mechanism. Positions 241, 282, and 309 each coordinate Mg(2+). (2R)-2-phosphoglycerate-binding residues include K334, R363, S364, and K385. Catalysis depends on K334, which acts as the Proton acceptor.

This sequence belongs to the enolase family. Requires Mg(2+) as cofactor.

It is found in the cytoplasm. Its subcellular location is the secreted. The protein localises to the cell surface. The catalysed reaction is (2R)-2-phosphoglycerate = phosphoenolpyruvate + H2O. Its pathway is carbohydrate degradation; glycolysis; pyruvate from D-glyceraldehyde 3-phosphate: step 4/5. In terms of biological role, catalyzes the reversible conversion of 2-phosphoglycerate (2-PG) into phosphoenolpyruvate (PEP). It is essential for the degradation of carbohydrates via glycolysis. The polypeptide is Enolase (Corynebacterium aurimucosum (strain ATCC 700975 / DSM 44827 / CIP 107346 / CN-1) (Corynebacterium nigricans)).